Here is a 479-residue protein sequence, read N- to C-terminus: Ribulose bisphosphate carboxylase large chain (479 aa).

Positions 1–2 are excised as a propeptide; the sequence is MS. Substrate is bound by residues Asn-123 and Thr-173. Lys-175 functions as the Proton acceptor in the catalytic mechanism. Substrate is bound at residue Lys-177. Mg(2+) is bound by residues Lys-201, Asp-203, and Glu-204. Lys-201 is modified (N6-carboxylysine). Phosphoserine is present on Ser-208. Residue His-294 is the Proton acceptor of the active site. Substrate-binding residues include Arg-295 and His-327. Thr-330 carries the post-translational modification Phosphothreonine. Ser-379 serves as a coordination point for substrate.

It belongs to the RuBisCO large chain family. Type I subfamily. Heterohexadecamer of 8 large chains and 8 small chains; disulfide-linked. The disulfide link is formed within the large subunit homodimers. Requires Mg(2+) as cofactor. In terms of processing, the disulfide bond which can form in the large chain dimeric partners within the hexadecamer appears to be associated with oxidative stress and protein turnover.

It localises to the plastid. Its subcellular location is the chloroplast. It carries out the reaction 2 (2R)-3-phosphoglycerate + 2 H(+) = D-ribulose 1,5-bisphosphate + CO2 + H2O. It catalyses the reaction D-ribulose 1,5-bisphosphate + O2 = 2-phosphoglycolate + (2R)-3-phosphoglycerate + 2 H(+). Functionally, ruBisCO catalyzes two reactions: the carboxylation of D-ribulose 1,5-bisphosphate, the primary event in carbon dioxide fixation, as well as the oxidative fragmentation of the pentose substrate in the photorespiration process. Both reactions occur simultaneously and in competition at the same active site. This is Ribulose bisphosphate carboxylase large chain from Barbarea verna (Land cress).